The primary structure comprises 1011 residues: Lysosomal alpha-mannosidase (1011 aa).

The first 49 residues, 1 to 49, serve as a signal peptide directing secretion; the sequence is MGAYARASGVCARGCLDSAGPWTMSRALRPPLPPLCFFLLLLAAAGARA. Cystine bridges form between Cys-55-Cys-358 and Cys-268-Cys-273. Residues His-72 and Asp-74 each contribute to the Zn(2+) site. Asn-133 carries N-linked (GlcNAc...) asparagine glycosylation. Position 196 (Asp-196) interacts with Zn(2+). Asp-196 serves as the catalytic Nucleophile. N-linked (GlcNAc...) asparagine glycans are attached at residues Asn-310 and Asn-367. Cystine bridges form between Cys-412–Cys-472 and Cys-493–Cys-501. His-446 is a Zn(2+) binding site. Asn-497, Asn-645, Asn-651, Asn-692, Asn-766, Asn-832, Asn-930, and Asn-989 each carry an N-linked (GlcNAc...) asparagine glycan.

Belongs to the glycosyl hydrolase 38 family. Zn(2+) serves as cofactor. Post-translationally, first processed into 3 peptides of 70 kDa, 42 kDa (D) and 13/15 kDa (E). The 70 kDa peptide is further processed into three peptides (A, B and C). The A, B and C peptides are disulfide-linked. Heavily glycosylated.

It localises to the lysosome. It carries out the reaction Hydrolysis of terminal, non-reducing alpha-D-mannose residues in alpha-D-mannosides.. Functionally, necessary for the catabolism of N-linked carbohydrates released during glycoprotein turnover. Cleaves all known types of alpha-mannosidic linkages. The sequence is that of Lysosomal alpha-mannosidase (MAN2B1) from Homo sapiens (Human).